The sequence spans 494 residues: Tyrosinase (494 aa).

Positions 38, 53, 64, 224, 228, and 256 each coordinate Cu cation.

It belongs to the tyrosinase family. The cofactor is Cu(2+).

The catalysed reaction is 2 L-dopa + O2 = 2 L-dopaquinone + 2 H2O. The enzyme catalyses L-tyrosine + O2 = L-dopaquinone + H2O. This chain is Tyrosinase (mepA), found in Rhizobium meliloti (Ensifer meliloti).